The primary structure comprises 1463 residues: Regulating synaptic membrane exocytosis protein 1 (1463 aa).

Residues 1 to 26 are disordered; the sequence is MSSAVGPRGPRPPTVPPPMQELPDLS. The segment covering 9-20 has biased composition (pro residues); sequence GPRPPTVPPPMQ. A RabBD domain is found at 22–205; it reads LPDLSHLTEE…TKSGAWFFGS (184 aa). Residues 133–193 form an FYVE-type zinc finger; sequence KDDAPTCGIC…VCNLCRKQQE (61 aa). Zn(2+) contacts are provided by Cys139, Cys142, Cys155, Cys158, Cys163, Cys166, Cys185, and Cys188. Positions 205–393 are disordered; it reads SGPQQPSQDG…DVELESESVS (189 aa). The span at 206–222 shows a compositional bias: polar residues; it reads GPQQPSQDGTLSDTATG. The span at 227–240 shows a compositional bias: basic and acidic residues; the sequence is VPREKKARLQERSR. The segment covering 241 to 256 has biased composition (polar residues); that stretch reads SQTPLSTAAVSSQDTA. Positions 327-372 are enriched in basic and acidic residues; the sequence is ADERERKERRETRRLEKGRSQDYPDRLEKREDGRVAEDEKQRKEEE. A compositionally biased stretch (acidic residues) spans 381-391; the sequence is SCEDVELESES. Phosphoserine is present on Ser413. Residues 440–526 enclose the PDZ domain; sequence RTTMPKESGA…EPQVEIIVSR (87 aa). Positions 533–567 are disordered; sequence RIPESSHPPLESSSSSFESQKMERPSISVISPTSP. Residues 535–551 show a composition bias toward low complexity; the sequence is PESSHPPLESSSSSFES. Phosphoserine occurs at positions 563 and 566. The region spanning 577–700 is the C2 1 domain; sequence LPGQLSVKLW…ALLDDEPHWY (124 aa). Residues 705–856 form a disordered region; sequence HDESSLPLPQ…YSSEPDSELL (152 aa). Ser716 carries the post-translational modification Phosphoserine. Residues 770-779 are compositionally biased toward polar residues; it reads ATTLTVPEQQ. Phosphoserine is present on Ser812. The segment covering 827 to 844 has biased composition (basic and acidic residues); sequence RHHDASRSLADHRSRHAE. Ser866 carries the post-translational modification Phosphoserine. The interval 874 to 1049 is disordered; that stretch reads SELQPSLDRA…RQLPQVPVRS (176 aa). Over residues 928 to 941 the composition is skewed to basic and acidic residues; sequence PENDRHSRKSERSS. A compositionally biased stretch (polar residues) spans 1021–1035; the sequence is QGSPTQSPPADTSFG. A Phosphoserine modification is found at Ser1023. Phosphothreonine is present on Thr1025. 7 positions are modified to phosphoserine: Ser1027, Ser1079, Ser1081, Ser1082, Ser1110, Ser1111, and Ser1113. The tract at residues 1104–1161 is disordered; that stretch reads DNASAKSSDSDVSDVSAISRASSTSRLSSTSFMSEQSERPRGRISSFTPKMQGRRMGT. Low complexity predominate over residues 1116-1137; sequence SDVSAISRASSTSRLSSTSFMS. Ser1187 carries the post-translational modification Phosphoserine. The tract at residues 1216–1266 is disordered; it reads RSRSTSQLSQTESGHKKLKSTIQRSTETGMAAEMRKMVRQPSRESTDGSIN. Residues 1248–1261 show a composition bias toward basic and acidic residues; it reads EMRKMVRQPSREST. Residues 1309–1427 enclose the C2 2 domain; that stretch reads AMGDIQIGME…DLSSMVIGWY (119 aa). Phosphoserine is present on residues Ser1448, Ser1451, Ser1454, and Ser1463.

In terms of assembly, binds SNAP25, SYT1 and CACNA1B. Interaction with SYT1 is enhanced by calcium ions. Interaction with SNAP25 is weaker in the presence of calcium ions. Interacts with TSPOAP1 and RIMBP2; interacts with PPFIA3 and PPFIA4. Interacts with ERC1. Interacts with RAB3A, RAB3B and RAB3D that have been activated by GTP-binding. Interacts with RAB3C, RAB10, RAB26 and RAB37. Binds UNC13A. In terms of processing, phosphorylated by BRSK1.

It localises to the cell membrane. The protein resides in the synapse. Its subcellular location is the presynaptic cell membrane. Functionally, rab effector involved in exocytosis. May act as scaffold protein that regulates neurotransmitter release at the active zone. Essential for maintaining normal probability of neurotransmitter release and for regulating release during short-term synaptic plasticity. Plays a role in dendrite formation by melanocytes. This Mus musculus (Mouse) protein is Regulating synaptic membrane exocytosis protein 1 (Rims1).